A 76-amino-acid polypeptide reads, in one-letter code: Vasotab-TY3 (76 aa).

A signal peptide spans 1-21; the sequence is MKFALFSVLVLMLIATFVAAD. A Kazal-like domain is found at 22–76; the sequence is DCPRICTSDYTPVCGTPSGGRRSANRTFANQCGLDSHNCLNKGDTYDKLHDGECK. Disulfide bonds link cysteine 23–cysteine 60, cysteine 27–cysteine 53, and cysteine 35–cysteine 75.

In terms of tissue distribution, expressed by the salivary gland.

The protein resides in the secreted. Its function is as follows. Vasodilator protein that inhibits vasoconstriction of isolated rat femoral artery induced by phenylephrine. Since platelet aggregation and vasoconstriction are key hemostatic responses, particularly in small wounds, this protein likely participates in the antihemostatic responses during blood feeding. Blocks L-type calcium channels (Cav1/CACNA1) in left ventricular myocytes isolated from rat hearts. This is Vasotab-TY3 from Tabanus yao (Horsefly).